Reading from the N-terminus, the 154-residue chain is Nucleoside diphosphate kinase A2 (154 aa).

ATP contacts are provided by Lys-13, Phe-61, Arg-89, Thr-95, Arg-106, and Asn-116. Residue His-119 is the Pros-phosphohistidine intermediate of the active site.

This sequence belongs to the NDK family. The cofactor is Mg(2+).

The protein resides in the cytoplasm. The enzyme catalyses a 2'-deoxyribonucleoside 5'-diphosphate + ATP = a 2'-deoxyribonucleoside 5'-triphosphate + ADP. The catalysed reaction is a ribonucleoside 5'-diphosphate + ATP = a ribonucleoside 5'-triphosphate + ADP. Its function is as follows. Major role in the synthesis of nucleoside triphosphates other than ATP. The ATP gamma phosphate is transferred to the NDP beta phosphate via a ping-pong mechanism, using a phosphorylated active-site intermediate. The protein is Nucleoside diphosphate kinase A2 of Xenopus laevis (African clawed frog).